A 274-amino-acid polypeptide reads, in one-letter code: Cytochrome b-c1 complex subunit Rieske, mitochondrial (274 aa).

The disordered stretch occupies residues 29–49 (XXXXXXXXTPEPPVLDPKRPI). Residues 79-103 (SHTDIKVPDFSDYRRSEVLDKTKSS) are Mitochondrial matrix-facing. Residues 104-140 (RESSDARKVFSYMVTATTAVGVTYAAKSIVTQFISSM) traverse the membrane as a helical segment. Topologically, residues 141 to 274 (SASADVLAMS…FLSDDMVVVG (134 aa)) are mitochondrial intermembrane. In terms of domain architecture, Rieske spans 187–272 (EAAVELSQLR…YEFLSDDMVV (86 aa)). Cysteine 217, histidine 219, cysteine 236, histidine 239, and serine 241 together coordinate [2Fe-2S] cluster. Cysteine 222 and cysteine 238 are joined by a disulfide.

Belongs to the Rieske iron-sulfur protein family. In terms of assembly, component of the ubiquinol-cytochrome c oxidoreductase (cytochrome b-c1 complex, complex III, CIII), a multisubunit enzyme composed of 11 subunits. The complex is composed of 3 respiratory subunits cytochrome b, cytochrome c1 and Rieske protein UQCRFS1, 2 core protein subunits UQCRC1/QCR1 and UQCRC2/QCR2, and 6 low-molecular weight protein subunits UQCRH/QCR6, UQCRB/QCR7, UQCRQ/QCR8, UQCR10/QCR9, UQCR11/QCR10 and subunit 9, the cleavage product of Rieske protein UQCRFS1. The complex exists as an obligatory dimer and forms supercomplexes (SCs) in the inner mitochondrial membrane with NADH-ubiquinone oxidoreductase (complex I, CI) and cytochrome c oxidase (complex IV, CIV), resulting in different assemblies (supercomplex SCI(1)III(2)IV(1) and megacomplex MCI(2)III(2)IV(2)). Incorporation of the Rieske protein UQCRFS1 is the penultimate step in complex III assembly. Interacts with TTC19, which is involved in the clearance of UQCRFS1 fragments. As to quaternary structure, component of the ubiquinol-cytochrome c oxidoreductase (cytochrome b-c1 complex, complex III, CIII). Subunit 9 corresponds to the mitochondrial targeting sequence (MTS) of Rieske protein UQCRFS1. It is retained after processing and incorporated inside complex III, where it remains bound to the complex and localizes between the 2 core subunits UQCRC1/QCR1 and UQCRC2/QCR2. Requires [2Fe-2S] cluster as cofactor. Proteolytic processing is necessary for the correct insertion of UQCRFS1 in the complex III dimer. Several fragments are generated during UQCRFS1 insertion, most probably due to the endogenous matrix-processing peptidase (MPP) activity of the 2 core protein subunits UQCRC1/QCR1 and UQCRC2/QCR2, which are homologous to the 2 mitochondrial-processing peptidase (MPP) subunits beta-MPP and alpha-MPP respectively. The action of the protease is also necessary for the clearance of the UQCRFS1 fragments.

It localises to the mitochondrion inner membrane. It carries out the reaction a quinol + 2 Fe(III)-[cytochrome c](out) = a quinone + 2 Fe(II)-[cytochrome c](out) + 2 H(+)(out). Functionally, component of the ubiquinol-cytochrome c oxidoreductase, a multisubunit transmembrane complex that is part of the mitochondrial electron transport chain which drives oxidative phosphorylation. The respiratory chain contains 3 multisubunit complexes succinate dehydrogenase (complex II, CII), ubiquinol-cytochrome c oxidoreductase (cytochrome b-c1 complex, complex III, CIII) and cytochrome c oxidase (complex IV, CIV), that cooperate to transfer electrons derived from NADH and succinate to molecular oxygen, creating an electrochemical gradient over the inner membrane that drives transmembrane transport and the ATP synthase. The cytochrome b-c1 complex catalyzes electron transfer from ubiquinol to cytochrome c, linking this redox reaction to translocation of protons across the mitochondrial inner membrane, with protons being carried across the membrane as hydrogens on the quinol. In the process called Q cycle, 2 protons are consumed from the matrix, 4 protons are released into the intermembrane space and 2 electrons are passed to cytochrome c. The Rieske protein is a catalytic core subunit containing a [2Fe-2S] iron-sulfur cluster. It cycles between 2 conformational states during catalysis to transfer electrons from the quinol bound in the Q(0) site in cytochrome b to cytochrome c1. Incorporation of UQCRFS1 is the penultimate step in complex III assembly. Component of the ubiquinol-cytochrome c oxidoreductase (cytochrome b-c1 complex, complex III, CIII). UQCRFS1 undergoes proteolytic processing once it is incorporated in the complex III dimer. One of the fragments, called subunit 9, corresponds to its mitochondrial targeting sequence (MTS). The proteolytic processing is necessary for the correct insertion of UQCRFS1 in the complex III dimer, but the persistence of UQCRFS1-derived fragments may prevent newly imported UQCRFS1 to be processed and assembled into complex III and is detrimental for the complex III structure and function. This is Cytochrome b-c1 complex subunit Rieske, mitochondrial (UQCRFS1) from Saimiri sciureus (Common squirrel monkey).